We begin with the raw amino-acid sequence, 267 residues long: Acyl-[acyl-carrier-protein]--UDP-N-acetylglucosamine O-acyltransferase (267 aa).

It belongs to the transferase hexapeptide repeat family. LpxA subfamily. In terms of assembly, homotrimer.

It is found in the cytoplasm. The catalysed reaction is a (3R)-hydroxyacyl-[ACP] + UDP-N-acetyl-alpha-D-glucosamine = a UDP-3-O-[(3R)-3-hydroxyacyl]-N-acetyl-alpha-D-glucosamine + holo-[ACP]. Its pathway is glycolipid biosynthesis; lipid IV(A) biosynthesis; lipid IV(A) from (3R)-3-hydroxytetradecanoyl-[acyl-carrier-protein] and UDP-N-acetyl-alpha-D-glucosamine: step 1/6. In terms of biological role, involved in the biosynthesis of lipid A, a phosphorylated glycolipid that anchors the lipopolysaccharide to the outer membrane of the cell. The sequence is that of Acyl-[acyl-carrier-protein]--UDP-N-acetylglucosamine O-acyltransferase from Cupriavidus taiwanensis (strain DSM 17343 / BCRC 17206 / CCUG 44338 / CIP 107171 / LMG 19424 / R1) (Ralstonia taiwanensis (strain LMG 19424)).